The following is a 65-amino-acid chain: Large ribosomal subunit protein bL28 (65 aa).

It belongs to the bacterial ribosomal protein bL28 family.

This is Large ribosomal subunit protein bL28 from Pseudothermotoga lettingae (strain ATCC BAA-301 / DSM 14385 / NBRC 107922 / TMO) (Thermotoga lettingae).